Reading from the N-terminus, the 437-residue chain is GTPase Obg (437 aa).

Residues 2 to 160 enclose the Obg domain; that stretch reads SMFLDTAKVS…RQLELELKIL (159 aa). Residues 161 to 338 form the OBG-type G domain; it reads ADVGLVGFPS…LLEATAELLA (178 aa). Residues 167–174, 192–196, 214–217, 284–287, and 319–321 contribute to the GTP site; these read GFPSVGKS, FTTIV, DLPG, NKMD, and SSL. Mg(2+)-binding residues include serine 174 and threonine 194. In terms of domain architecture, OCT spans 359–437; it reads GFAAEEKAFE…IGKFEFEFVD (79 aa).

Belongs to the TRAFAC class OBG-HflX-like GTPase superfamily. OBG GTPase family. In terms of assembly, monomer. It depends on Mg(2+) as a cofactor.

It is found in the cytoplasm. In terms of biological role, an essential GTPase which binds GTP, GDP and possibly (p)ppGpp with moderate affinity, with high nucleotide exchange rates and a fairly low GTP hydrolysis rate. Plays a role in control of the cell cycle, stress response, ribosome biogenesis and in those bacteria that undergo differentiation, in morphogenesis control. The chain is GTPase Obg from Streptococcus equi subsp. equi (strain 4047).